Consider the following 488-residue polypeptide: UDP-N-acetylmuramoyl-L-alanyl-D-glutamate--2,6-diaminopimelate ligase (488 aa).

UDP-N-acetyl-alpha-D-muramoyl-L-alanyl-D-glutamate contacts are provided by residues Leu24, Ser26, and 41-43 (HQV). Residue 113 to 119 (GTNGKTT) participates in ATP binding. UDP-N-acetyl-alpha-D-muramoyl-L-alanyl-D-glutamate-binding positions include Asn154, 155–156 (TT), Ser182, Gln188, and Arg190. An N6-carboxylysine modification is found at Lys222. Residues Arg386, 410–413 (DNPR), Gly461, and Glu465 contribute to the meso-2,6-diaminopimelate site. The Meso-diaminopimelate recognition motif signature appears at 410–413 (DNPR).

Belongs to the MurCDEF family. MurE subfamily. Mg(2+) is required as a cofactor. Carboxylation is probably crucial for Mg(2+) binding and, consequently, for the gamma-phosphate positioning of ATP.

It is found in the cytoplasm. It carries out the reaction UDP-N-acetyl-alpha-D-muramoyl-L-alanyl-D-glutamate + meso-2,6-diaminopimelate + ATP = UDP-N-acetyl-alpha-D-muramoyl-L-alanyl-gamma-D-glutamyl-meso-2,6-diaminopimelate + ADP + phosphate + H(+). It participates in cell wall biogenesis; peptidoglycan biosynthesis. Catalyzes the addition of meso-diaminopimelic acid to the nucleotide precursor UDP-N-acetylmuramoyl-L-alanyl-D-glutamate (UMAG) in the biosynthesis of bacterial cell-wall peptidoglycan. This chain is UDP-N-acetylmuramoyl-L-alanyl-D-glutamate--2,6-diaminopimelate ligase, found in Haemophilus influenzae (strain 86-028NP).